The chain runs to 748 residues: Polyribonucleotide nucleotidyltransferase (748 aa).

Positions 522 and 528 each coordinate Mg(2+). The 60-residue stretch at 588 to 647 folds into the KH domain; the sequence is PRVTTIRVPVDKIGEVIGPKGKIINAITEETGAQISIEDDGTVFVGATDGPSAQAAIDRI. Positions 659–728 constitute an S1 motif domain; sequence GERFLGTVVK…KRGKISLVLV (70 aa).

This sequence belongs to the polyribonucleotide nucleotidyltransferase family. It depends on Mg(2+) as a cofactor.

It is found in the cytoplasm. It carries out the reaction RNA(n+1) + phosphate = RNA(n) + a ribonucleoside 5'-diphosphate. Functionally, involved in mRNA degradation. Catalyzes the phosphorolysis of single-stranded polyribonucleotides processively in the 3'- to 5'-direction. The chain is Polyribonucleotide nucleotidyltransferase from Mycobacterium avium (strain 104).